A 254-amino-acid polypeptide reads, in one-letter code: MKIGIFDSGAGGMTVLKAIREAYPNVDVVYLGDTARVPYGIRSKETIVRYSKECANFLKDKGVDLLVVACNTASAYALEELKREFPFPVFGVIEPGVKEALRKSKTKRIGVIGTQATIKSGAYQEALKRAGAEVYSKACPLFVPLVEEGMIEGEIPKKVVEHYLKDFKGKVDTLILGCTHYPLLKREIQNFLEGVNVIDSSRATAKSLKDFVKNEGSGSLELYFTDRSQNLERLIKLILGEEVEPKITSEVFVL.

Residues 7–8 and 39–40 contribute to the substrate site; these read DS and YG. C70 acts as the Proton donor/acceptor in catalysis. 71 to 72 lines the substrate pocket; that stretch reads NT. Catalysis depends on C178, which acts as the Proton donor/acceptor. Substrate is bound at residue 179–180; it reads TH.

Belongs to the aspartate/glutamate racemases family.

It carries out the reaction L-glutamate = D-glutamate. The protein operates within cell wall biogenesis; peptidoglycan biosynthesis. Provides the (R)-glutamate required for cell wall biosynthesis. In Aquifex aeolicus (strain VF5), this protein is Glutamate racemase.